The primary structure comprises 156 residues: Small ribosomal subunit protein uS7 (156 aa).

This sequence belongs to the universal ribosomal protein uS7 family. As to quaternary structure, part of the 30S ribosomal subunit. Contacts proteins S9 and S11.

Functionally, one of the primary rRNA binding proteins, it binds directly to 16S rRNA where it nucleates assembly of the head domain of the 30S subunit. Is located at the subunit interface close to the decoding center, probably blocks exit of the E-site tRNA. This chain is Small ribosomal subunit protein uS7, found in Clostridium novyi (strain NT).